The primary structure comprises 312 residues: Formate dehydrogenase iron-sulfur subunit (312 aa).

4Fe-4S ferredoxin-type domains follow at residues 35-65 (IAKLIDVSTCIGCKACQVGCSEWNDIRSDIN), 97-129 (LEWLIRKDGCMHCTEPGCLKACPAPGAIIQYAN), 130-159 (GIVDFQSDKCIGCGYCIAGCPFNIPRMNPE), and 164-195 (YKCTLCVDRVSVGQEPACVKTCPTGAIRFGSK). 16 residues coordinate [4Fe-4S] cluster: cysteine 44, cysteine 47, cysteine 50, cysteine 54, cysteine 106, cysteine 109, cysteine 114, cysteine 118, cysteine 139, cysteine 142, cysteine 145, cysteine 149, cysteine 166, cysteine 169, cysteine 181, and cysteine 185.

In terms of assembly, formate dehydrogenase is a membrane-bound complex, formed by subunits alpha, beta and gamma. Requires [4Fe-4S] cluster as cofactor.

The protein localises to the cell membrane. In terms of biological role, allows to use formate as major electron donor during aerobic respiration. The beta chain is an electron transfer unit containing 4 cysteine clusters involved in the formation of iron-sulfur centers. Electrons are transferred from the gamma chain to the molybdenum cofactor of the alpha subunit. The chain is Formate dehydrogenase iron-sulfur subunit (fdxH) from Haemophilus influenzae (strain ATCC 51907 / DSM 11121 / KW20 / Rd).